The following is a 315-amino-acid chain: Acetyl-coenzyme A carboxylase carboxyl transferase subunit alpha (315 aa).

The 254-residue stretch at 36–289 (LSKKRLELME…RKAVAAELKI (254 aa)) folds into the CoA carboxyltransferase C-terminal domain.

Belongs to the AccA family. Acetyl-CoA carboxylase is a heterohexamer composed of biotin carboxyl carrier protein (AccB), biotin carboxylase (AccC) and two subunits each of ACCase subunit alpha (AccA) and ACCase subunit beta (AccD).

It localises to the cytoplasm. The enzyme catalyses N(6)-carboxybiotinyl-L-lysyl-[protein] + acetyl-CoA = N(6)-biotinyl-L-lysyl-[protein] + malonyl-CoA. It participates in lipid metabolism; malonyl-CoA biosynthesis; malonyl-CoA from acetyl-CoA: step 1/1. In terms of biological role, component of the acetyl coenzyme A carboxylase (ACC) complex. First, biotin carboxylase catalyzes the carboxylation of biotin on its carrier protein (BCCP) and then the CO(2) group is transferred by the carboxyltransferase to acetyl-CoA to form malonyl-CoA. The protein is Acetyl-coenzyme A carboxylase carboxyl transferase subunit alpha of Francisella tularensis subsp. holarctica (strain FTNF002-00 / FTA).